The primary structure comprises 693 residues: Glycine--tRNA ligase beta subunit (693 aa).

The protein belongs to the class-II aminoacyl-tRNA synthetase family. As to quaternary structure, tetramer of two alpha and two beta subunits.

Its subcellular location is the cytoplasm. It catalyses the reaction tRNA(Gly) + glycine + ATP = glycyl-tRNA(Gly) + AMP + diphosphate. In Natranaerobius thermophilus (strain ATCC BAA-1301 / DSM 18059 / JW/NM-WN-LF), this protein is Glycine--tRNA ligase beta subunit.